A 65-amino-acid polypeptide reads, in one-letter code: Large ribosomal subunit protein bL35 (65 aa).

The segment at 1–22 is disordered; sequence MPKIKTLRSAAKRFKKTASGKF. Basic residues predominate over residues 10-22; that stretch reads AAKRFKKTASGKF.

Belongs to the bacterial ribosomal protein bL35 family.

The polypeptide is Large ribosomal subunit protein bL35 (Buchnera aphidicola subsp. Schizaphis graminum (strain Sg)).